The primary structure comprises 103 residues: Large ribosomal subunit protein eL14 (103 aa).

This sequence belongs to the eukaryotic ribosomal protein eL14 family.

The chain is Large ribosomal subunit protein eL14 from Pyrobaculum islandicum (strain DSM 4184 / JCM 9189 / GEO3).